A 417-amino-acid polypeptide reads, in one-letter code: S-adenosylmethionine synthase (417 aa).

Histidine 16 is a binding site for ATP. Aspartate 18 contacts Mg(2+). Glutamate 44 lines the K(+) pocket. L-methionine-binding residues include glutamate 57 and glutamine 100. Residues 100-110 (QSPDIAQGVDT) are flexible loop. Residues 175–177 (DGK), 251–252 (KF), aspartate 260, 266–267 (RK), alanine 283, and lysine 287 each bind ATP. Aspartate 260 is an L-methionine binding site. Residue lysine 291 participates in L-methionine binding.

Belongs to the AdoMet synthase family. In terms of assembly, homotetramer; dimer of dimers. The cofactor is Mg(2+). K(+) serves as cofactor.

It is found in the cytoplasm. The catalysed reaction is L-methionine + ATP + H2O = S-adenosyl-L-methionine + phosphate + diphosphate. It functions in the pathway amino-acid biosynthesis; S-adenosyl-L-methionine biosynthesis; S-adenosyl-L-methionine from L-methionine: step 1/1. In terms of biological role, catalyzes the formation of S-adenosylmethionine (AdoMet) from methionine and ATP. The overall synthetic reaction is composed of two sequential steps, AdoMet formation and the subsequent tripolyphosphate hydrolysis which occurs prior to release of AdoMet from the enzyme. The polypeptide is S-adenosylmethionine synthase (Synechococcus elongatus (strain ATCC 33912 / PCC 7942 / FACHB-805) (Anacystis nidulans R2)).